Consider the following 352-residue polypeptide: C-C chemokine receptor type 5 (352 aa).

Residues 1-30 (MDYQTSTPLYDIDYGMSEPCQKLNVRQIAA) lie on the Extracellular side of the membrane. Residue Y3 is modified to Sulfotyrosine. The O-linked (GalNAc...) serine glycan is linked to S6. 2 positions are modified to sulfotyrosine: Y10 and Y14. 2 disulfides stabilise this stretch: C20–C269 and C101–C178. The helical transmembrane segment at 31–58 (RLLPPLYSLVFIFGFVGNMLVVLILINC) threads the bilayer. Topologically, residues 59–68 (KKLKSMTDIY) are cytoplasmic. A helical membrane pass occupies residues 69–89 (LLNLAISDLLFIITIPFWAHY). The Extracellular segment spans residues 90–102 (AADQWVFGNTMCQ). The helical transmembrane segment at 103 to 124 (LFTGFYFIGYFGGIFFIILLTI) threads the bilayer. The Cytoplasmic segment spans residues 125–141 (DRYLAIVHAVFALKART). Residues 142-166 (VTFGAATSVVTWVVAVFASLPGIIF) traverse the membrane as a helical segment. The Extracellular segment spans residues 167 to 198 (TKSQKEGSRHTCSPHFPSSQYHFWKNFQTLKI). A helical transmembrane segment spans residues 199–218 (VILGLVLPLLVMIVCYSGII). The Cytoplasmic segment spans residues 219 to 235 (KTLLRCRNEKKKHKAVR). Residues 236–260 (LIFVIMIVYFLFWAPYNIVLLLSTF) traverse the membrane as a helical segment. Residues 261-277 (QEFFGLNNCSGSNRLDQ) are Extracellular-facing. Residues 278 to 301 (AMQVTETLGMTHCCINPIIYAFVG) form a helical membrane-spanning segment. Over 302–352 (EKFRNYLLRFFRKYFASRFCKGCPVFQGEAPERVSSVYTRSTGEQEISVGL) the chain is Cytoplasmic. Residues C321 and C324 are each lipidated (S-palmitoyl cysteine). Phosphoserine; by BARK1 occurs at positions 336, 337, 342, and 349.

Belongs to the G-protein coupled receptor 1 family. As to quaternary structure, interacts with PRAF2. Efficient ligand binding to CCL3/MIP-1alpha and CCL4/MIP-1beta requires sulfation, O-glycosylation and sialic acid modifications. Glycosylation on Ser-6 is required for efficient binding of CCL4. Interacts with GRK2. Interacts with ARRB1 and ARRB2. Interacts with CNIH4. Interacts with S100A4; this interaction stimulates T-lymphocyte chemotaxis. Post-translationally, sulfated on at least 2 of the N-terminal tyrosines. Sulfation is required for efficient binding of the chemokines, CCL3 and CCL4. O-glycosylated, but not N-glycosylated. Ser-6 appears to be the major site. Also sialylated glycans present which contribute to chemokine binding. Ser-17 may also be glycosylated and, if so, with small moieties such as a T-antigen. In terms of processing, palmitoylation in the C-terminal is important for cell surface expression. Post-translationally, phosphorylation on serine residues in the C-terminal is stimulated by binding CC chemokines especially by APO-RANTES.

Its subcellular location is the cell membrane. Receptor for a number of inflammatory CC-chemokines including CCL3/MIP-1-alpha, CCL4/MIP-1-beta and RANTES and subsequently transduces a signal by increasing the intracellular calcium ion level. May play a role in the control of granulocytic lineage proliferation or differentiation. Participates in T-lymphocyte migration to the infection site by acting as a chemotactic receptor. This chain is C-C chemokine receptor type 5 (CCR5), found in Bos taurus (Bovine).